The following is a 900-amino-acid chain: Phospholipase DDHD1 (900 aa).

Disordered stretches follow at residues 1–28 (MNYP…ELGS), 100–152 (LRYY…GGPA), and 202–233 (GARP…DEDR). Phosphoserine occurs at positions 8 and 11. Residues 130–140 (SGGGGATGGSP) are compositionally biased toward gly residues. S537 is a catalytic residue. The 276-residue stretch at 611–886 (LKFKVENFFC…ALFLLTFMYK (276 aa)) folds into the DDHD domain. Disordered regions lie at residues 706–725 (AKEP…PSPV) and 768–801 (SSTT…TQTL). Residues 710–725 (TSVSENEGISTIPSPV) are compositionally biased toward polar residues. Residue S723 is modified to Phosphoserine. A compositionally biased stretch (basic and acidic residues) spans 776 to 787 (TSKDSMEDEKKP). Over residues 791–801 (PSATTVGTQTL) the composition is skewed to polar residues.

Belongs to the PA-PLA1 family. Forms homooligomers and, to a much smaller extent, heterooligomers with DDHD2. Highly expressed in testis. Also expressed in brain, spleen and lung. Only expressed in cerebellum in fetal brain.

It localises to the cytoplasm. The catalysed reaction is a 1,2-diacyl-sn-glycero-3-phosphate + H2O = a 2-acyl-sn-glycerol 3-phosphate + a fatty acid + H(+). It carries out the reaction a 1,2-diacyl-sn-glycero-3-phospho-(1D-myo-inositol) + H2O = a 2-acyl-sn-glycero-3-phospho-D-myo-inositol + a fatty acid + H(+). It catalyses the reaction 1-octadecanoyl-2-(5Z,8Z,11Z,14Z-eicosatetraenoyl)-sn-glycero-3-phospho-(1D-myo-inositol) + H2O = 2-(5Z,8Z,11Z,14Z-eicosatetraenoyl)-sn-glycero-3-phospho-(1D-myo-inositol) + octadecanoate + H(+). The enzyme catalyses a 1-acyl-2-(5Z,8Z,11Z,14Z-eicosatetraenoyl)-sn-glycero-3-phospho-(1D-myo-inositol) + H2O = 2-(5Z,8Z,11Z,14Z-eicosatetraenoyl)-sn-glycero-3-phospho-(1D-myo-inositol) + a fatty acid + H(+). The catalysed reaction is 1,2-dihexadecanoyl-sn-glycero-3-phospho-(1D-myo-inositol) + H2O = 2-hexadecanoyl-sn-glycero-3-phospho-(1D-myo-inositol) + hexadecanoate + H(+). It carries out the reaction a 1-acyl-2-(5Z,8Z,11Z,14Z)-eicosatetraenoyl-sn-glycero-3-phosphate + H2O = 2-(5Z,8Z,11Z,14Z-eicosatetraenoyl)-sn-glycero-3-phosphate + a fatty acid + H(+). It catalyses the reaction 1,2-di-(9Z-octadecenoyl)-sn-glycero-3-phosphate + H2O = 2-(9Z-octadecenoyl)-sn-glycero-3-phosphate + (9Z)-octadecenoate + H(+). The enzyme catalyses 1-hexadecanoyl-2-(9Z-octadecenoyl)-sn-glycero-3-phosphate + H2O = 2-(9Z-octadecenoyl)-sn-glycero-3-phosphate + hexadecanoate + H(+). The catalysed reaction is 1-hexadecanoyl-2-(9Z-octadecenoyl)-sn-glycero-3-phospho-L-serine + H2O = 2-(9Z-octadecenoyl)-sn-glycero-3-phospho-L-serine + hexadecanoate + H(+). It carries out the reaction 1,2-di-(5Z,8Z,11Z,14Z)-eicosatetraenoyl-sn-glycero-3-phosphate + H2O = 2-(5Z,8Z,11Z,14Z-eicosatetraenoyl)-sn-glycero-3-phosphate + (5Z,8Z,11Z,14Z)-eicosatetraenoate + H(+). It catalyses the reaction 1-octadecanoyl-2-(5Z,8Z,11Z,14Z-eicosatetraenoyl)-sn-glycero-3-phosphate + H2O = 2-(5Z,8Z,11Z,14Z-eicosatetraenoyl)-sn-glycero-3-phosphate + octadecanoate + H(+). The enzyme catalyses a 1,2-diacyl-sn-glycero-3-phosphocholine + H2O = a 2-acyl-sn-glycero-3-phosphocholine + a fatty acid + H(+). The catalysed reaction is a 1,2-diacyl-sn-glycero-3-phosphoethanolamine + H2O = a 2-acyl-sn-glycero-3-phosphoethanolamine + a fatty acid + H(+). It carries out the reaction a 1,2-diacyl-sn-glycero-3-phospho-L-serine + H2O = a 2-acyl-sn-glycero-3-phospho-L-serine + a fatty acid + H(+). It catalyses the reaction a 1,2-diacyl-sn-glycero-3-phospho-(1'-sn-glycerol) + H2O = 2-acyl-sn-glycero-3-phospho-(1'-sn-glycerol) + a fatty acid + H(+). The enzyme catalyses 1-hexadecanoyl-2-(9Z-octadecenoyl)-sn-glycero-3-phospho-(1'-sn-glycerol) + H2O = 2-(9Z-octadecenoyl)-sn-glycero-3-phospho-(1'-sn-glycerol) + hexadecanoate + H(+). The catalysed reaction is 1-acyl-2-(5Z,8Z,11Z,14Z-eicosatetraenoyl)-sn-glycero-3-phosphocholine + H2O = 2-(5Z,8Z,11Z,14Z)-eicosatetraenoyl-sn-glycero-3-phosphocholine + a fatty acid + H(+). It carries out the reaction 1-acyl-2-(5Z,8Z,11Z,14Z)-eicosatetraenoyl-sn-glycero-3-phosphoethanolamine + H2O = 2-(5Z,8Z,11Z,14Z)-eicosatetraenoyl-sn-glycero-3-phosphoethanolamine + a fatty acid + H(+). It catalyses the reaction 1-(9Z-octadecenoyl)-2-(7Z,10Z,13Z,16Z,19Z-docosapentaenoyl)-sn-glycero-3-phospho-1D-myo-inositol + H2O = 2-(7Z,10Z,13Z,16Z,19Z-docosapentaenoyl)-sn-glycero-3-phospho-1D-myo-inositol + (9Z)-octadecenoate + H(+). The enzyme catalyses 1-(9Z-octadecenoyl)-2-(5Z,8Z,11Z,14Z-eicosatetraenoyl)-sn-glycero-3-phospho-1D-myo-inositol + H2O = 2-(5Z,8Z,11Z,14Z-eicosatetraenoyl)-sn-glycero-3-phospho-(1D-myo-inositol) + (9Z)-octadecenoate + H(+). The catalysed reaction is 1,2-di-(9Z-octadecenoyl)-sn-glycero-3-phospho-1D-myo-inositol + H2O = 2-(9Z-octadecenoyl)-sn-glycero-3-phospho-1D-myo-inositol + (9Z)-octadecenoate + H(+). It carries out the reaction 1-(9Z-octadecenoyl)-2-(8Z,11Z,14Z-eicosatrienoyl)-sn-glycero-3-phospho-1D-myo-inositol + H2O = 2-(8Z,11Z,14Z-eicosatrienoyl)-sn-glycero-3-phospho-1D-myo-inositol + (9Z)-octadecenoate + H(+). It catalyses the reaction 1,2-di-(9Z-octadecenoyl)-sn-glycero-3-phosphocholine + H2O = (9Z-octadecenoyl)-sn-glycero-3-phosphocholine + (9Z)-octadecenoate + H(+). It participates in phospholipid metabolism; phosphatidylinositol metabolism. Its activity is regulated as follows. Phosphatidate (1,2-diacyl-sn-glycero-3-phosphate, PA) can positively regulate phospholipase A1 activity. Its function is as follows. Phospholipase A1 (PLA1) that hydrolyzes ester bonds at the sn-1 position of glycerophospholipids producing a free fatty acid and a lysophospholipid. Prefers phosphatidate (1,2-diacyl-sn-glycero-3-phosphate, PA) as substrate in vitro, but can efficiently hydrolyze phosphatidylinositol (1,2-diacyl-sn-glycero-3-phospho-(1D-myo-inositol), PI), as well as a range of other glycerophospholipid substrates such as phosphatidylcholine (1,2-diacyl-sn-glycero-3-phosphocholine, PC), phosphatidylethanolamine (1,2-diacyl-sn-glycero-3-phosphoethanolamine, PE), phosphatidylserine (1,2-diacyl-sn-glycero-3-phospho-L-serine, PS) and phosphatidylglycerol (1,2-diacyl-sn-glycero-3-phospho-(1'-sn-glycerol), PG). Involved in the regulation of the endogenous content of polyunsaturated PI and PS lipids in the nervous system. Changes in these lipids extend to downstream metabolic products like PI phosphates PIP and PIP2, which play fundamental roles in cell biology. Regulates mitochondrial morphology. These dynamic changes may be due to PA hydrolysis at the mitochondrial surface. May play a regulatory role in spermatogenesis or sperm function. The protein is Phospholipase DDHD1 of Homo sapiens (Human).